A 135-amino-acid chain; its full sequence is Transcription antitermination protein NusB (135 aa).

Belongs to the NusB family.

Its function is as follows. Involved in transcription antitermination. Required for transcription of ribosomal RNA (rRNA) genes. Binds specifically to the boxA antiterminator sequence of the ribosomal RNA (rrn) operons. This chain is Transcription antitermination protein NusB, found in Lacticaseibacillus paracasei (strain ATCC 334 / BCRC 17002 / CCUG 31169 / CIP 107868 / KCTC 3260 / NRRL B-441) (Lactobacillus paracasei).